Consider the following 477-residue polypeptide: Cyclin-A1-2 (477 aa).

Belongs to the cyclin family. Cyclin AB subfamily.

The chain is Cyclin-A1-2 (CYCA1-2) from Oryza sativa subsp. japonica (Rice).